A 59-amino-acid chain; its full sequence is Large ribosomal subunit protein bL32 (59 aa).

It belongs to the bacterial ribosomal protein bL32 family. Part of the 50S ribosomal subunit.

This Bacillus subtilis (strain 168) protein is Large ribosomal subunit protein bL32 (rpmF).